A 150-amino-acid chain; its full sequence is UPF0178 protein BceJ2315_16760 (150 aa).

Belongs to the UPF0178 family.

The sequence is that of UPF0178 protein BceJ2315_16760 from Burkholderia cenocepacia (strain ATCC BAA-245 / DSM 16553 / LMG 16656 / NCTC 13227 / J2315 / CF5610) (Burkholderia cepacia (strain J2315)).